The following is a 291-amino-acid chain: Pantothenate synthetase (291 aa).

Residue 30–37 (MGYLHVGH) participates in ATP binding. H37 functions as the Proton donor in the catalytic mechanism. Q61 is a (R)-pantoate binding site. Beta-alanine is bound at residue Q61. 147-150 (GEKD) contributes to the ATP binding site. (R)-pantoate is bound at residue Q153. ATP is bound by residues V176 and 184–187 (CSSR).

This sequence belongs to the pantothenate synthetase family. In terms of assembly, homodimer.

It localises to the cytoplasm. It catalyses the reaction (R)-pantoate + beta-alanine + ATP = (R)-pantothenate + AMP + diphosphate + H(+). Its pathway is cofactor biosynthesis; (R)-pantothenate biosynthesis; (R)-pantothenate from (R)-pantoate and beta-alanine: step 1/1. Catalyzes the condensation of pantoate with beta-alanine in an ATP-dependent reaction via a pantoyl-adenylate intermediate. The polypeptide is Pantothenate synthetase (Rhizobium meliloti (strain 1021) (Ensifer meliloti)).